The following is a 284-amino-acid chain: Tropomyosin (284 aa).

Positions 1 to 47 are disordered; that stretch reads MDAIKKKMQAMKIEKDNAMDRADAAEEKARQQQERVEKLEEELRDTQ. Residues 1–284 are a coiled coil; that stretch reads MDAIKKKMQA…DQTFQELSGY (284 aa). Positions 12 to 38 are enriched in basic and acidic residues; the sequence is KIEKDNAMDRADAAEEKARQQQERVEK.

Belongs to the tropomyosin family. In terms of assembly, homodimer.

Its function is as follows. Tropomyosin, in association with the troponin complex, plays a central role in the calcium dependent regulation of muscle contraction. In Trichinella pseudospiralis (Parasitic roundworm), this protein is Tropomyosin.